Consider the following 366-residue polypeptide: Ribosomal RNA large subunit methyltransferase M (366 aa).

Residues serine 188, 221–224 (CPGG), aspartate 240, aspartate 260, and aspartate 277 contribute to the S-adenosyl-L-methionine site. Residue lysine 306 is the Proton acceptor of the active site.

This sequence belongs to the class I-like SAM-binding methyltransferase superfamily. RNA methyltransferase RlmE family. RlmM subfamily. In terms of assembly, monomer.

The protein resides in the cytoplasm. It catalyses the reaction cytidine(2498) in 23S rRNA + S-adenosyl-L-methionine = 2'-O-methylcytidine(2498) in 23S rRNA + S-adenosyl-L-homocysteine + H(+). In terms of biological role, catalyzes the 2'-O-methylation at nucleotide C2498 in 23S rRNA. This chain is Ribosomal RNA large subunit methyltransferase M, found in Escherichia coli O127:H6 (strain E2348/69 / EPEC).